The chain runs to 208 residues: 3-demethoxyubiquinol 3-hydroxylase (208 aa).

Positions 57, 87, 90, 139, 171, and 174 each coordinate Fe cation.

Belongs to the COQ7 family. It depends on Fe cation as a cofactor.

The protein localises to the cell membrane. The catalysed reaction is a 5-methoxy-2-methyl-3-(all-trans-polyprenyl)benzene-1,4-diol + AH2 + O2 = a 3-demethylubiquinol + A + H2O. Its pathway is cofactor biosynthesis; ubiquinone biosynthesis. Functionally, catalyzes the hydroxylation of 2-nonaprenyl-3-methyl-6-methoxy-1,4-benzoquinol during ubiquinone biosynthesis. The protein is 3-demethoxyubiquinol 3-hydroxylase of Burkholderia multivorans (strain ATCC 17616 / 249).